The chain runs to 465 residues: Pancreatic triacylglycerol lipase (465 aa).

The signal sequence occupies residues 1–16 (MLLLWILSLFLETVAG). 2 cysteine pairs are disulfide-bonded: Cys-20/Cys-26 and Cys-107/Cys-118. Ser-169 functions as the Nucleophile in the catalytic mechanism. Residue Asp-193 is the Charge relay system of the active site. The Ca(2+) site is built by Glu-204, Arg-207, Asp-209, and Asp-212. Cys-254 and Cys-278 are oxidised to a cystine. The active-site Charge relay system is His-280. 2 disulfides stabilise this stretch: Cys-302/Cys-313 and Cys-316/Cys-321. Asn-351, Asn-398, and Asn-425 each carry an N-linked (GlcNAc...) asparagine glycan. The 111-residue stretch at 355-465 (WRYRIAVTLS…EEVLLTLQPC (111 aa)) folds into the PLAT domain. Cys-449 and Cys-465 are disulfide-bonded.

This sequence belongs to the AB hydrolase superfamily. Lipase family. As to quaternary structure, forms a 1:1 stoichiometric complex with (pro)colipase/CLPS.

The protein resides in the secreted. It carries out the reaction a triacylglycerol + H2O = a diacylglycerol + a fatty acid + H(+). The enzyme catalyses 1,2,3-tributanoylglycerol + H2O = dibutanoylglycerol + butanoate + H(+). The catalysed reaction is 1,2,3-tri-(9Z-octadecenoyl)-glycerol + H2O = di-(9Z)-octadecenoylglycerol + (9Z)-octadecenoate + H(+). It catalyses the reaction all-trans-retinyl hexadecanoate + H2O = all-trans-retinol + hexadecanoate + H(+). It carries out the reaction 1,2-di-(9Z-octadecenoyl)-glycerol + H2O = (9Z-octadecenoyl)-glycerol + (9Z)-octadecenoate + H(+). Inhibited by bile salts, is reactivated by (pro)colipase/CLPS. Plays an important role in fat metabolism. It preferentially splits the esters of long-chain fatty acids at positions 1 and 3, producing mainly 2-monoacylglycerol and free fatty acids, and shows considerably higher activity against insoluble emulsified substrates than against soluble ones. The sequence is that of Pancreatic triacylglycerol lipase (PNLIP) from Cavia porcellus (Guinea pig).